Consider the following 1061-residue polypeptide: Eukaryotic translation initiation factor 3 subunit A (1061 aa).

Residues 114 to 126 (QSSIEATTGSSSV) are compositionally biased toward polar residues. A disordered region spans residues 114–133 (QSSIEATTGSSSVEDLEASE). A PCI domain is found at 339 to 523 (LQKAATFVVL…GVLSFDVDVF (185 aa)). 2 coiled-coil regions span residues 609-724 (EVIQ…KRLD) and 789-906 (RADL…AAAA). Basic and acidic residues predominate over residues 828 to 901 (REKREREEKE…EAMARRRAEK (74 aa)). The disordered stretch occupies residues 828-1061 (REKREREEKE…KYVPKFRREG (234 aa)). Composition is skewed to pro residues over residues 950-962 (SGPP…PPPI) and 1000-1011 (APPPERSGPPPR).

The protein belongs to the eIF-3 subunit A family. In terms of assembly, component of the eukaryotic translation initiation factor 3 (eIF-3) complex.

The protein localises to the cytoplasm. RNA-binding component of the eukaryotic translation initiation factor 3 (eIF-3) complex, which is involved in protein synthesis of a specialized repertoire of mRNAs and, together with other initiation factors, stimulates binding of mRNA and methionyl-tRNAi to the 40S ribosome. The eIF-3 complex specifically targets and initiates translation of a subset of mRNAs involved in cell proliferation. This chain is Eukaryotic translation initiation factor 3 subunit A, found in Chaetomium globosum (strain ATCC 6205 / CBS 148.51 / DSM 1962 / NBRC 6347 / NRRL 1970) (Soil fungus).